Here is a 1430-residue protein sequence, read N- to C-terminus: 3'-5' RNA helicase YTHDC2 (1430 aa).

Positions 1 to 37 are disordered; the sequence is MSRPSSVSPRQPAPGGGGGGGPSPCGPGGGGRAKGLK. Over residues 14–33 the composition is skewed to gly residues; it reads PGGGGGGGPSPCGPGGGGRA. Residues 38–106 enclose the R3H domain; that stretch reads DIRIDEEVKI…NRYLTVKKKD (69 aa). One can recognise a Helicase ATP-binding domain in the interval 203 to 369; the sequence is VKIIKENKVV…FGSCPVIYIQ (167 aa). ATP is bound at residue 216 to 223; that stretch reads GETGSGKT. The DEAH box motif lies at 316–319; it reads DEVH. 2 ANK repeats span residues 506–538 and 539–571; these read TSAT…SKAS and NGWM…FGNL. Residues 612–784 form the Helicase C-terminal domain; that stretch reads LLYNICHSCD…ELCLHTKLLA (173 aa). Ser-1089, Ser-1090, and Ser-1092 each carry phosphoserine. Polar residues predominate over residues 1164–1174; sequence EQSAGLQQPSG. The disordered stretch occupies residues 1164 to 1288; the sequence is EQSAGLQQPS…SPSPRPNMPV (125 aa). Positions 1191–1200 are enriched in low complexity; sequence SSWRSNNSRK. Residue Ser-1202 is modified to Phosphoserine. Basic and acidic residues predominate over residues 1231-1249; that stretch reads KYKDRGILHPKRGTEDRSD. Residues 1250 to 1264 are compositionally biased toward low complexity; the sequence is QSSLKSTDSSSYPSP. 3 positions are modified to phosphoserine: Ser-1263, Ser-1267, and Ser-1281. Positions 1288-1418 constitute a YTH domain; it reads VRYFIMKSSN…LVGEQLLQLW (131 aa). RNA is bound by residues 1294-1296, Trp-1310, and Trp-1360; that span reads KSS.

The protein belongs to the DEAD box helicase family. DEAH subfamily. In terms of assembly, interacts with MEIOC; binds transcripts that regulate the mitotic cell cycle inhibiting progression into metaphase, thereby allowing meiotic prophase to proceed normally. Interacts (via ANK repeats) with XRN1. Interacts with ZCCHC4. Associates with the small ribosomal subunit. Interacts with RBM46. In terms of tissue distribution, expressed in testis. Not detected in spermatogonia next to the tubule wall but is strongly expressed in spermatocytes, suggesting that it is up-regulated in germ cells upon entry into meiosis.

It is found in the cytoplasm. Its subcellular location is the perinuclear region. The enzyme catalyses ATP + H2O = ADP + phosphate + H(+). 3'-5' RNA helicase that plays a key role in the male and female germline by promoting transition from mitotic to meiotic divisions in stem cells. Specifically recognizes and binds N6-methyladenosine (m6A)-containing RNAs, a modification present at internal sites of mRNAs and some non-coding RNAs that plays a role in the efficiency of RNA processing and stability. Essential for ensuring a successful progression of the meiotic program in the germline by regulating the level of m6A-containing RNAs. Acts by binding and promoting degradation of m6A-containing mRNAs: the 3'-5' RNA helicase activity is required for this process and RNA degradation may be mediated by XRN1 exoribonuclease. Required for both spermatogenesis and oogenesis. The chain is 3'-5' RNA helicase YTHDC2 from Homo sapiens (Human).